The sequence spans 362 residues: Probable dual-specificity RNA methyltransferase RlmN (362 aa).

Catalysis depends on Glu99, which acts as the Proton acceptor. The Radical SAM core domain maps to 105 to 341 (SPDRHTVCVS…VTVRKSQGAS (237 aa)). Cys112 and Cys346 are joined by a disulfide. Residues Cys119, Cys123, and Cys126 each contribute to the [4Fe-4S] cluster site. Residues 171 to 172 (GE), Ser204, 227 to 229 (SLH), and Asn303 each bind S-adenosyl-L-methionine. Catalysis depends on Cys346, which acts as the S-methylcysteine intermediate.

Belongs to the radical SAM superfamily. RlmN family. [4Fe-4S] cluster is required as a cofactor.

It is found in the cytoplasm. The catalysed reaction is adenosine(2503) in 23S rRNA + 2 reduced [2Fe-2S]-[ferredoxin] + 2 S-adenosyl-L-methionine = 2-methyladenosine(2503) in 23S rRNA + 5'-deoxyadenosine + L-methionine + 2 oxidized [2Fe-2S]-[ferredoxin] + S-adenosyl-L-homocysteine. It catalyses the reaction adenosine(37) in tRNA + 2 reduced [2Fe-2S]-[ferredoxin] + 2 S-adenosyl-L-methionine = 2-methyladenosine(37) in tRNA + 5'-deoxyadenosine + L-methionine + 2 oxidized [2Fe-2S]-[ferredoxin] + S-adenosyl-L-homocysteine. Specifically methylates position 2 of adenine 2503 in 23S rRNA and position 2 of adenine 37 in tRNAs. In Chlorobium phaeobacteroides (strain BS1), this protein is Probable dual-specificity RNA methyltransferase RlmN.